We begin with the raw amino-acid sequence, 28 residues long: Endoglucanase (28 aa).

Glutamate 20 acts as the Nucleophile in catalysis.

This sequence belongs to the glycosyl hydrolase 5 (cellulase A) family.

The protein localises to the cell membrane. The enzyme catalyses Endohydrolysis of (1-&gt;4)-beta-D-glucosidic linkages in cellulose, lichenin and cereal beta-D-glucans.. This chain is Endoglucanase, found in Schizophyllum commune (Split gill fungus).